A 278-amino-acid polypeptide reads, in one-letter code: HTH-type transcriptional regulator HdfR (278 aa).

Residues 1–58 form the HTH lysR-type domain; the sequence is MDTELLKTFLEVSRTRHFGRAAEALYLTQSAVSFRIRQLENQLGVNLFTRHRNNIRLT. The segment at residues 18–37 is a DNA-binding region (H-T-H motif); that stretch reads FGRAAEALYLTQSAVSFRIR.

The protein belongs to the LysR transcriptional regulatory family.

Functionally, negatively regulates the transcription of the flagellar master operon flhDC by binding to the upstream region of the operon. This chain is HTH-type transcriptional regulator HdfR, found in Salmonella dublin (strain CT_02021853).